We begin with the raw amino-acid sequence, 84 residues long: Small ribosomal subunit protein uS17 (84 aa).

It belongs to the universal ribosomal protein uS17 family. As to quaternary structure, part of the 30S ribosomal subunit.

One of the primary rRNA binding proteins, it binds specifically to the 5'-end of 16S ribosomal RNA. The polypeptide is Small ribosomal subunit protein uS17 (Histophilus somni (strain 129Pt) (Haemophilus somnus)).